The primary structure comprises 596 residues: MNDLIKRKLDILPDQPGCYLMKDRQGTIIYVGKAKVLKNRVRSYFTGTHEGKTQRLVSEIEDFEYIVTSSNIEALILELNLIKLHDPKYNVMLTDDKTYPYLKITNEKHPRLITTRKVKKDKAKYFGPYPNAYAASETKKLLDRLYPLRKCVQLPSKVCLYYHMGQCIAPCVKEIEGHVYQEMIEDMTKFLNGGVEAVKKELEVKMLAAAENLEFERAKEFRDQIAHIDTVMQKQKIVSSDTTNRDVFGYAVEKGWMCVQVFFVRQGKLIERDVSIFPIYQDPEEEFLTFVGRFYEKPEHIKPKEVFIPQAIDGAILTELLGIKVLTPKRGQKKELVDLATKNAEIAVAAKFQLIERQEERTIGACEALGDAMGITTPLRIEAFDNSHMHGTDAVSAMVVFIDGKPAKKEYRKYKTRTAAKHDDYGAMQEVIRRRYIRVLKEGLPLPDLVLIDGGKGQMEVAREVLEDELGLVIPIAGLAKDDKHNTSQLLFGDPPEVIALKRTSDGFYLLQRIQDEVHRFAITFLRQQHEKHAIQSVLDQIEGVGPKRKQQLLKHFGSVKKIREASELALQEAGMPANLASHIYAYFQQESLSKE.

The GIY-YIG domain occupies 14–91 (DQPGCYLMKD…IKLHDPKYNV (78 aa)). The 36-residue stretch at 196–231 (EAVKKELEVKMLAAAENLEFERAKEFRDQIAHIDTV) folds into the UVR domain.

Belongs to the UvrC family. In terms of assembly, interacts with UvrB in an incision complex.

Its subcellular location is the cytoplasm. Its function is as follows. The UvrABC repair system catalyzes the recognition and processing of DNA lesions. UvrC both incises the 5' and 3' sides of the lesion. The N-terminal half is responsible for the 3' incision and the C-terminal half is responsible for the 5' incision. In Lysinibacillus sphaericus (strain C3-41), this protein is UvrABC system protein C.